The sequence spans 1219 residues: FYVE, RhoGEF and PH domain-containing protein 5 (1219 aa).

Disordered regions lie at residues 1 to 85, 94 to 113, 201 to 227, and 310 to 367; these read MGSP…SCQI, EEDF…PTES, SDTQ…GQVP, and GRES…PSSV. Residues 23-50 are compositionally biased toward acidic residues; the sequence is EVFEEDSADAAEGEDQIEQEEPPNCDEE. Residues 201-214 are compositionally biased toward polar residues; it reads SDTQAASGTLSGYS. The span at 319-337 shows a compositional bias: basic and acidic residues; the sequence is REPEGAGLDSHRVRRKEDN. A compositionally biased stretch (polar residues) spans 346 to 356; sequence SSGSFSQRSHL. A compositionally biased stretch (low complexity) spans 357-367; the sequence is PSSGTSTPSSV. Threonine 555 carries the phosphothreonine modification. Positions 586 to 599 are enriched in low complexity; the sequence is ESKQQSSEQEAESA. Positions 586–644 are disordered; that stretch reads ESKQQSSEQEAESAYTEPYKVCPISAAPREDLTSDEEQGSSEEEDSASRDPSLSHKGEG. The segment covering 618–630 has biased composition (acidic residues); the sequence is TSDEEQGSSEEED. The span at 631–644 shows a compositional bias: basic and acidic residues; sequence SASRDPSLSHKGEG. One can recognise a DH domain in the interval 647 to 840; that stretch reads RALVIAQELL…SKVTDRANES (194 aa). The 95-residue stretch at 869-963 folds into the PH 1 domain; the sequence is EFLKEGTLMR…WHYCLSRALP (95 aa). An FYVE-type zinc finger spans residues 998 to 1057; sequence VTHAMMCMNCGCDFSLTVRRHHCHACGKIVCRNCSRNKYPLKCLKNRMAKVCDGCFRELK. Positions 1004, 1007, 1020, 1023, 1028, 1031, 1049, and 1052 each coordinate Zn(2+). Residues 1120–1218 form the PH 2 domain; the sequence is GSAISGYLSR…WMEAMEDASV (99 aa).

Expressed in highly vascularized tissues, such as lung, kidney and ovary.

It is found in the cytoplasm. Its subcellular location is the cytoskeleton. The protein localises to the cell projection. The protein resides in the ruffle membrane. It localises to the endoplasmic reticulum. It is found in the golgi apparatus. Its subcellular location is the early endosome. Activates CDC42, a member of the Ras-like family of Rho- and Rac proteins, by exchanging bound GDP for free GTP. Mediates VEGF-induced CDC42 activation. May regulate proangiogenic action of VEGF in vascular endothelial cells, including network formation, directional movement and proliferation. May play a role in regulating the actin cytoskeleton and cell shape. This chain is FYVE, RhoGEF and PH domain-containing protein 5 (Fgd5), found in Mus musculus (Mouse).